Consider the following 78-residue polypeptide: Large ribosomal subunit protein bL28 (78 aa).

Belongs to the bacterial ribosomal protein bL28 family.

This chain is Large ribosomal subunit protein bL28 (rpmB), found in Xylella fastidiosa (strain 9a5c).